Reading from the N-terminus, the 237-residue chain is Ribosomally synthesized cyclic peptide ustiloxin B precursosr (237 aa).

The N-terminal stretch at 1-19 (MKLILTLLVSGLCALAAPA) is a signal peptide. Propeptides lie at residues 20 to 22 (AKR) and 234 to 237 (HGGH).

Post-translationally, ustA is processed by the subtilisin-like endoprotease kex2 that is outside the ustiloxin B gene cluster, at the C-terminal side of Arg-Lys, after transfer to Golgi apparatus through the endoplasmic reticulum (ER). Cleavage by kex2 generates 16 peptides YAIG-I to YAIG-XVI. To process the precursor peptide further, at least two peptidases are necessary to cleave the N-terminal and C-terminal sides of the Tyr-Ala-Ile-Gly core peptide which serves as backbone for the synthesis of ustiloxin B, through cyclization and modification of the tyrosine. One of the two peptidases must be the serine peptidase ustP; and the other pepdidase is probably ustH. Macrocyclization of the core peptide derived from ustA requires the tyrosinase ustQ, as well as the homologous oxidases ustYa and ustYb, and leads to the production of the first cyclization product N-desmethylustiloxin F. For the formation of N-desmethylustiloxin F, three oxidation steps are required, hydroxylation at the benzylic position, hydroxylation at either the aromatic ring of Tyr or beta-position of Ile, and oxidative cyclization. UstQ may catalyze the oxidation of a phenol moiety, whereas the ustYa and ustYb are most likely responsible for the remaining two-step oxidations. N-desmethylustiloxin F is then methylated by ustM to yield ustiloxin F which in turn substrate of the cytochrome P450 monooxygenase ustC which catalyzes the formation of S-deoxyustiloxin H. The flavoprotein monooxygenases ustF1 and ustF2 then participate in the modification of the side chain of S-deoxyustiloxin H, leading to the synthesis of an oxime intermediate, via ustiloxin H. Finally, carboxylative dehydration performed by the cysteine desulfurase-like protein ustD yields ustiloxin B.

It participates in mycotoxin biosynthesis. Functionally, ribosomally synthesized cyclic peptide ustiloxin B precursor: Part of the gene cluster that mediates the biosynthesis of the secondary metabolite ustiloxin B, an antimitotic tetrapeptide. The ustA translated product contains a 16-fold repeated peptide embedding the tetrapeptide Tyr-Ala-Ile-Gly, that is converted into the cyclic moiety of ustiloxin B. The sequence is that of Ribosomally synthesized cyclic peptide ustiloxin B precursosr from Aspergillus flavus (strain ATCC 200026 / FGSC A1120 / IAM 13836 / NRRL 3357 / JCM 12722 / SRRC 167).